Consider the following 328-residue polypeptide: Biotin synthase (328 aa).

A Radical SAM core domain is found at asparagine 48 to arginine 275. [4Fe-4S] cluster-binding residues include cysteine 63, cysteine 67, and cysteine 70. 4 residues coordinate [2Fe-2S] cluster: cysteine 107, cysteine 138, cysteine 198, and arginine 270.

This sequence belongs to the radical SAM superfamily. Biotin synthase family. Homodimer. [4Fe-4S] cluster is required as a cofactor. [2Fe-2S] cluster serves as cofactor.

It carries out the reaction (4R,5S)-dethiobiotin + (sulfur carrier)-SH + 2 reduced [2Fe-2S]-[ferredoxin] + 2 S-adenosyl-L-methionine = (sulfur carrier)-H + biotin + 2 5'-deoxyadenosine + 2 L-methionine + 2 oxidized [2Fe-2S]-[ferredoxin]. It participates in cofactor biosynthesis; biotin biosynthesis; biotin from 7,8-diaminononanoate: step 2/2. Its function is as follows. Catalyzes the conversion of dethiobiotin (DTB) to biotin by the insertion of a sulfur atom into dethiobiotin via a radical-based mechanism. The sequence is that of Biotin synthase from Brucella ovis (strain ATCC 25840 / 63/290 / NCTC 10512).